Reading from the N-terminus, the 374-residue chain is DNA/RNA-binding protein ALBA4 (374 aa).

This sequence belongs to the histone-like Alba family.

Its subcellular location is the cytoplasm. It is found in the cell cortex. The protein resides in the perinuclear region. Functionally, possesses DNA- and RNA-binding activities. Binds to DNA with relaxed sequence specificity. May associate with the subtelomeric TARE6 repeats. Regulates the abundance of transcript sub-populations in a stage-specific manner. Regulates activation of male gametocytes. Participates in the coordination of sporozoite development in the oocyst. The sequence is that of DNA/RNA-binding protein ALBA4 from Plasmodium yoelii yoelii.